The sequence spans 346 residues: tRNA N6-adenosine threonylcarbamoyltransferase (346 aa).

Fe cation is bound by residues histidine 111 and histidine 115. Substrate-binding positions include 134 to 138 (LVSGG), aspartate 167, glycine 180, and asparagine 279. Residue aspartate 307 coordinates Fe cation.

The protein belongs to the KAE1 / TsaD family. Fe(2+) serves as cofactor.

Its subcellular location is the cytoplasm. It catalyses the reaction L-threonylcarbamoyladenylate + adenosine(37) in tRNA = N(6)-L-threonylcarbamoyladenosine(37) in tRNA + AMP + H(+). Its function is as follows. Required for the formation of a threonylcarbamoyl group on adenosine at position 37 (t(6)A37) in tRNAs that read codons beginning with adenine. Is involved in the transfer of the threonylcarbamoyl moiety of threonylcarbamoyl-AMP (TC-AMP) to the N6 group of A37, together with TsaE and TsaB. TsaD likely plays a direct catalytic role in this reaction. The polypeptide is tRNA N6-adenosine threonylcarbamoyltransferase (Burkholderia mallei (strain ATCC 23344)).